Consider the following 683-residue polypeptide: MNLCSSGATASTTSLSSTGQAERSGGVPGGGAEGGGGGGGSGNSGGGGKTSDVSAEASTLCFAGGSGTAGAITGTDELSNANSPANGAGGASGSTGSAQQPTGSNGHSHLHNENNANMPPETRPKMVTVKHPESNKPKPTTKKSKPIQADQDVIKALQRCRDEGIKRLDLSKSSITVIPSTVKECVHLTELYLYSNKIGQLPPEIGCLVSLRNLALNENSLTSLPESLQNCSQLKVLDLRHNKLAEIPSVIYRLRSLTTLYLRFNRITAVADDLRQLVNLTMLSLRENKIRELGSAIGALVNLTTLDVSHNHLEHLPEDIGNCVNLSALDLQHNELLDIPDSIGNLKSLVRLGMRYNRLSSVPATLKNCKSMDEFNVEGNGITQLPDGMLASLSGLTTITLSRNQFASYPTGGPAQFTNVYSINLEHNRIDKIPYGIFSRAKGLTKLNMKENMLTALPLDIGTWVNMVELNLATNALQKLPDDIMNLQNLEILILSNNMLKKIPNTIGNLRRLRILDLEENRIEVLPHEIGLLHELQRLILQTNQITMLPRSIGHLGNLTHLSVSENNLQFLPEEIGSLESLENLYINQNPGLEKLPFELALCQNLKYLNIDKCPLSTIPPEIQAGGPSLVLQWLKMHSPYRQIDCYYQYELQTVNQAPGAGGNGGGGAAAAGGSASRSSDRR.

Residues 1–19 are compositionally biased toward low complexity; the sequence is MNLCSSGATASTTSLSSTG. Disordered stretches follow at residues 1–54 and 74–150; these read MNLC…SDVS and GTDE…IQAD. The segment covering 26–49 has biased composition (gly residues); it reads GVPGGGAEGGGGGGGSGNSGGGGK. Residues 74 to 86 show a composition bias toward low complexity; that stretch reads GTDELSNANSPAN. Polar residues predominate over residues 99–117; it reads QQPTGSNGHSHLHNENNAN. LRR repeat units lie at residues 164-185, 187-208, 210-231, 233-254, 256-277, 279-300, 302-323, 325-346, 348-370, 371-392, 395-416, 419-440, 443-464, 466-487, 489-510, 512-533, 535-556, 558-579, 581-603, and 605-626; these read GIKR…VKEC, HLTE…IGCL, SLRN…LQNC, QLKV…IYRL, SLTT…LRQL, NLTM…IGAL, NLTT…IGNC, NLSA…IGNL, SLVR…KNCK, SMDE…MLAS, GLTT…GPAQ, NVYS…IFSR, GLTK…IGTW, NMVE…IMNL, NLEI…IGNL, RLRI…IGLL, ELQR…IGHL, NLTH…IGSL, SLEN…LALC, and NLKY…IQAG. Gly residues predominate over residues 661–671; sequence AGGNGGGGAAA. Residues 661-683 form a disordered region; the sequence is AGGNGGGGAAAAGGSASRSSDRR. Residues 672–683 are compositionally biased toward low complexity; it reads AGGSASRSSDRR.

Belongs to the SHOC2 family.

Its function is as follows. Acts as a Ras effector and participates in MAPK pathway activation. Probably acts as a regulatory subunit of protein phosphatase that specifically dephosphorylates Raf kinase and stimulate Raf activity at specialized signaling complexes upon Ras activation. This Drosophila sechellia (Fruit fly) protein is Leucine-rich repeat protein soc-2 homolog (Sur-8).